The primary structure comprises 70 residues: MTQKDWGEENQGMLTGATWLDECQSAYLWGRKPRHSWADPPESLDNWSFKTHPFHPWRINFTLTPPPETP.

This is an uncharacterized protein from Torque teno tamarin virus (isolate So-TTV2).